Reading from the N-terminus, the 151-residue chain is Large ribosomal subunit protein uL13 (151 aa).

Residues 129 to 151 (PTHPHDAQKPKELNINTIPGAES) form a disordered region. A compositionally biased stretch (basic and acidic residues) spans 131-140 (HPHDAQKPKE).

The protein belongs to the universal ribosomal protein uL13 family. In terms of assembly, part of the 50S ribosomal subunit.

This protein is one of the early assembly proteins of the 50S ribosomal subunit, although it is not seen to bind rRNA by itself. It is important during the early stages of 50S assembly. In Trichormus variabilis (strain ATCC 29413 / PCC 7937) (Anabaena variabilis), this protein is Large ribosomal subunit protein uL13.